The sequence spans 502 residues: Probable cytosol aminopeptidase (502 aa).

2 residues coordinate Mn(2+): Lys-267 and Asp-272. Lys-279 is an active-site residue. Asp-290, Asp-349, and Glu-351 together coordinate Mn(2+). Arg-353 is an active-site residue.

Belongs to the peptidase M17 family. It depends on Mn(2+) as a cofactor.

It localises to the cytoplasm. It carries out the reaction Release of an N-terminal amino acid, Xaa-|-Yaa-, in which Xaa is preferably Leu, but may be other amino acids including Pro although not Arg or Lys, and Yaa may be Pro. Amino acid amides and methyl esters are also readily hydrolyzed, but rates on arylamides are exceedingly low.. It catalyses the reaction Release of an N-terminal amino acid, preferentially leucine, but not glutamic or aspartic acids.. Presumably involved in the processing and regular turnover of intracellular proteins. Catalyzes the removal of unsubstituted N-terminal amino acids from various peptides. The sequence is that of Probable cytosol aminopeptidase from Aeromonas salmonicida (strain A449).